Here is a 440-residue protein sequence, read N- to C-terminus: C4-dicarboxylate transport protein (440 aa).

9 helical membrane-spanning segments follow: residues 7–29, 49–66, 79–101, 143–165, 186–208, 221–243, 291–313, 328–350, and 355–377; these read LYKS…GHYY, MVIA…IAGM, ALLY…VNVV, VVGA…FGFA, VMFN…AMAF, LGYL…LGGI, VVGL…YLTM, ITHQ…GVTG, and VLAA…ILGI. The segment at 419 to 440 is disordered; that stretch reads GGAPLIDTRPTDDLGVAEGPAR.

It belongs to the dicarboxylate/amino acid:cation symporter (DAACS) (TC 2.A.23) family.

The protein localises to the cell inner membrane. Its function is as follows. Responsible for the transport of dicarboxylates such as succinate, fumarate, and malate from the periplasm across the membrane. This is C4-dicarboxylate transport protein from Pseudomonas putida (strain ATCC 47054 / DSM 6125 / CFBP 8728 / NCIMB 11950 / KT2440).